The sequence spans 303 residues: Putative S-adenosyl-L-methionine-dependent methyltransferase MAV_4435 (303 aa).

S-adenosyl-L-methionine-binding positions include aspartate 129 and 158–159 (DL).

This sequence belongs to the UPF0677 family.

In terms of biological role, exhibits S-adenosyl-L-methionine-dependent methyltransferase activity. The sequence is that of Putative S-adenosyl-L-methionine-dependent methyltransferase MAV_4435 from Mycobacterium avium (strain 104).